The chain runs to 168 residues: Transmembrane protein 229b (168 aa).

The Cytoplasmic segment spans residues methionine 1–tyrosine 14. Residues leucine 15–valine 35 form a helical membrane-spanning segment. Residues asparagine 36–lysine 40 are Extracellular-facing. The helical transmembrane segment at phenylalanine 41 to glutamate 61 threads the bilayer. At lysine 62–asparagine 72 the chain is on the cytoplasmic side. Residues isoleucine 73–leucine 93 form a helical membrane-spanning segment. Residues isoleucine 94–aspartate 109 lie on the Extracellular side of the membrane. A helical membrane pass occupies residues phenylalanine 110–isoleucine 130. Over methionine 131–asparagine 168 the chain is Cytoplasmic.

This sequence belongs to the TMEM229 family.

Its subcellular location is the membrane. This is Transmembrane protein 229b (tmem229b) from Xenopus tropicalis (Western clawed frog).